The chain runs to 224 residues: Ribonuclease 3 (224 aa).

One can recognise an RNase III domain in the interval 4-127 (IEKLERSLTY…IIGAIHLEAG (124 aa)). E40 is a binding site for Mg(2+). D44 is an active-site residue. Residues D113 and E116 each coordinate Mg(2+). The active site involves E116. Positions 154 to 223 (DYKTKLQEIT…AKIALEKLGA (70 aa)) constitute a DRBM domain.

This sequence belongs to the ribonuclease III family. Homodimer. Mg(2+) serves as cofactor.

Its subcellular location is the cytoplasm. The catalysed reaction is Endonucleolytic cleavage to 5'-phosphomonoester.. In terms of biological role, digests double-stranded RNA. Involved in the processing of primary rRNA transcript to yield the immediate precursors to the large and small rRNAs (23S and 16S). Processes some mRNAs, and tRNAs when they are encoded in the rRNA operon. Processes pre-crRNA and tracrRNA of type II CRISPR loci if present in the organism. In Campylobacter jejuni (strain RM1221), this protein is Ribonuclease 3.